The primary structure comprises 216 residues: MAFLLRVVPRLQGPTAWRRPLQGLWCCSGQGDSKRWVGSRSPHSREKSPGTETETFHTIYRFRAIRAIGFLSRLKLAQTAVTVVALPPGFYCYSQGLMTLSSLCLLGGVASFALAMLCWMSHFFRRLVGILYVNESGTLLRVAHLTFWGWRQDTYCAVSDMIPLSESQERVQDVFVRIQQYSGKQTFYLTLRYGRILDRERFAQVFGTLATLKNSK.

Residues 1 to 68 (MAFLLRVVPR…IYRFRAIRAI (68 aa)) are Mitochondrial matrix-facing. The segment at 31 to 52 (GDSKRWVGSRSPHSREKSPGTE) is disordered. Residues 69 to 91 (GFLSRLKLAQTAVTVVALPPGFY) traverse the membrane as a helical segment. The Mitochondrial intermembrane portion of the chain corresponds to 92 to 103 (CYSQGLMTLSSL). The chain crosses the membrane as a helical span at residues 104–124 (CLLGGVASFALAMLCWMSHFF). Residues 125 to 216 (RRLVGILYVN…GTLATLKNSK (92 aa)) lie on the Mitochondrial matrix side of the membrane.

This sequence belongs to the TMEM186 family. As to quaternary structure, part of the mitochondrial complex I assembly/MCIA complex that comprises at least the core subunits TMEM126B, NDUFAF1, ECSIT and ACAD9 and complement subunits such as COA1 and TMEM186. Interacts with MT-ND3.

Its subcellular location is the mitochondrion inner membrane. Its function is as follows. As part of the MCIA complex, required for efficient assembly of the mitochondrial complex I. The polypeptide is Transmembrane protein 186 (Mus musculus (Mouse)).